A 74-amino-acid polypeptide reads, in one-letter code: Putative defensin-like protein 27 (74 aa).

The first 19 residues, 1-19 (MVHPRFVFFAFLALSVLLA), serve as a signal peptide directing secretion. 4 disulfide bridges follow: cysteine 36–cysteine 74, cysteine 46–cysteine 65, cysteine 51–cysteine 70, and cysteine 55–cysteine 72.

Belongs to the DEFL family.

The protein localises to the secreted. This Arabidopsis thaliana (Mouse-ear cress) protein is Putative defensin-like protein 27.